We begin with the raw amino-acid sequence, 125 residues long: Testis-specific protein LINC02914 (125 aa).

A compositionally biased stretch (basic and acidic residues) spans M1–A12. The interval M1–Q45 is disordered.

Expressed in testes and ejaculated spermatozoa (at protein level).

The protein localises to the cytoplasm. Its subcellular location is the nucleus. The protein resides in the cell projection. It is found in the cilium. It localises to the flagellum. May play a role in the flagellum biology. This chain is Testis-specific protein LINC02914, found in Homo sapiens (Human).